The following is a 228-amino-acid chain: 7-cyano-7-deazaguanine synthase (228 aa).

11–21 (LSGGLDSATVL) contacts ATP. Zn(2+) contacts are provided by Cys-191, Cys-201, Cys-204, and Cys-207.

It belongs to the QueC family. The cofactor is Zn(2+).

It carries out the reaction 7-carboxy-7-deazaguanine + NH4(+) + ATP = 7-cyano-7-deazaguanine + ADP + phosphate + H2O + H(+). It functions in the pathway purine metabolism; 7-cyano-7-deazaguanine biosynthesis. In terms of biological role, catalyzes the ATP-dependent conversion of 7-carboxy-7-deazaguanine (CDG) to 7-cyano-7-deazaguanine (preQ(0)). The protein is 7-cyano-7-deazaguanine synthase of Magnetococcus marinus (strain ATCC BAA-1437 / JCM 17883 / MC-1).